Reading from the N-terminus, the 374-residue chain is Chaperone protein DnaJ (374 aa).

Residues 5 to 70 (DYYEILEIER…GKRQLYDRYG (66 aa)) form the J domain. The segment at 136–213 (GCKKEIKIRY…CNGKGHENKE (78 aa)) adopts a CR-type zinc-finger fold. Residues C149, C152, C165, C168, C187, C190, C201, and C204 each contribute to the Zn(2+) site. CXXCXGXG motif repeat units follow at residues 149-156 (CPDCKGTG), 165-172 (CPDCGGRG), 187-194 (CPKCGGSG), and 201-208 (CPKCNGKG).

The protein belongs to the DnaJ family. Homodimer. Zn(2+) serves as cofactor.

The protein localises to the cytoplasm. In terms of biological role, participates actively in the response to hyperosmotic and heat shock by preventing the aggregation of stress-denatured proteins and by disaggregating proteins, also in an autonomous, DnaK-independent fashion. Unfolded proteins bind initially to DnaJ; upon interaction with the DnaJ-bound protein, DnaK hydrolyzes its bound ATP, resulting in the formation of a stable complex. GrpE releases ADP from DnaK; ATP binding to DnaK triggers the release of the substrate protein, thus completing the reaction cycle. Several rounds of ATP-dependent interactions between DnaJ, DnaK and GrpE are required for fully efficient folding. Also involved, together with DnaK and GrpE, in the DNA replication of plasmids through activation of initiation proteins. This is Chaperone protein DnaJ from Wolinella succinogenes (strain ATCC 29543 / DSM 1740 / CCUG 13145 / JCM 31913 / LMG 7466 / NCTC 11488 / FDC 602W) (Vibrio succinogenes).